We begin with the raw amino-acid sequence, 192 residues long: Pyridoxal 5'-phosphate synthase subunit PdxT (192 aa).

Position 50-52 (50-52) interacts with L-glutamine; it reads GES. C82 serves as the catalytic Nucleophile. L-glutamine is bound by residues R109 and 136 to 137; that span reads IR. Active-site charge relay system residues include H172 and E174.

The protein belongs to the glutaminase PdxT/SNO family. In the presence of PdxS, forms a dodecamer of heterodimers. Only shows activity in the heterodimer.

It catalyses the reaction aldehydo-D-ribose 5-phosphate + D-glyceraldehyde 3-phosphate + L-glutamine = pyridoxal 5'-phosphate + L-glutamate + phosphate + 3 H2O + H(+). It carries out the reaction L-glutamine + H2O = L-glutamate + NH4(+). Its pathway is cofactor biosynthesis; pyridoxal 5'-phosphate biosynthesis. Catalyzes the hydrolysis of glutamine to glutamate and ammonia as part of the biosynthesis of pyridoxal 5'-phosphate. The resulting ammonia molecule is channeled to the active site of PdxS. This is Pyridoxal 5'-phosphate synthase subunit PdxT from Haemophilus influenzae (strain PittGG).